Here is a 164-residue protein sequence, read N- to C-terminus: Cyclin-dependent kinase inhibitor 1 (164 aa).

N-acetylserine is present on Ser-2. Residue Ser-2 forms a Glycyl serine ester (Ser-Gly) (interchain with G-Cter in ubiquitin) linkage. Residues Cys-13–Cys-41 form a C4-type zinc finger. The segment at Ala-17–Pro-24 is required for binding cyclins. Residues Phe-53 to Pro-58 are required for binding CDKs. Positions Leu-76 to Pro-164 are disordered. Thr-80 is subject to Phosphothreonine; by LKB1. Phosphoserine; by GSK3-beta is present on Ser-114. Ser-130 is subject to Phosphoserine. A PIP-box K+4 motif motif is present at residues Arg-140–Pro-164. Residues Lys-141 to Arg-156 carry the Nuclear localization signal motif. Thr-145 bears the Phosphothreonine; by PKA, PKB/AKT1, PIM1 and PIM2 mark. Phosphoserine; by PKC and NUAK1 is present on Ser-146. Residues His-152–Pro-164 form an interaction with TRIM39 region. Residues Ser-153 to Pro-164 show a composition bias toward basic residues. Phosphoserine; by PKC; in vitro is present on Ser-160.

It belongs to the CDI family. Interacts with HDAC1; the interaction is prevented by competitive binding of C10orf90/FATS to HDAC1 facilitating acetylation and protein stabilization of CDKN1A/p21. Interacts with MKRN1. Interacts with PSMA3. Interacts with PCNA. Component of the ternary complex, cyclin D-CDK4-CDKN1A. Interacts (via its N-terminal domain) with CDK4; the interaction promotes the assembly of the cyclin D-CDK4 complex, its nuclear translocation and promotes the cyclin D-dependent enzyme activity of CDK4. Binding to CDK2 leads to CDK2/cyclin E inactivation at the G1-S phase DNA damage checkpoint, thereby arresting cells at the G1-S transition during DNA repair. Interacts with PIM1. Interacts with STK11 and NUAK1. Interacts wih DTL. Interacts with isoform 1 and isoform 2 of TRIM39. Interacts with PKP3; the interaction sequesters CDKN1A to the cytoplasm thereby repressing its role as an inhibitor of CDK4- and CDK6-driven RB1 phosphorylation. Post-translationally, phosphorylation of Thr-145 by Akt or of Ser-146 by PKC impairs binding to PCNA. Phosphorylation at Ser-114 by GSK3-beta enhances ubiquitination by the DCX(DTL) complex. Phosphorylation of Thr-145 by PIM2 enhances CDKN1A stability and inhibits cell proliferation. Phosphorylation of Thr-145 by PIM1 results in the relocation of CDKN1A to the cytoplasm and enhanced CDKN1A protein stability. UV radiation-induced phosphorylation at Thr-80 by LKB1 and at Ser-146 by NUAK1 leads to its degradation. Ubiquitinated by MKRN1; leading to polyubiquitination and 26S proteasome-dependent degradation. Ubiquitinated by the DCX(DTL) complex, also named CRL4(CDT2) complex, leading to its degradation during S phase or following UV irradiation. Ubiquitination by the DCX(DTL) complex is essential to control replication licensing and is PCNA-dependent: interacts with PCNA via its PIP-box, while the presence of the containing the 'K+4' motif in the PIP box, recruit the DCX(DTL) complex, leading to its degradation. Ubiquitination at Ser-2 leads to degradation by the proteasome pathway. Ubiquitinated by RNF114; leading to proteasomal degradation. In terms of processing, acetylation leads to protein stability. Acetylated in vitro on Lys-141, Lys-154, Lys-161 and Lys-163. Deacetylation by HDAC1 is prevented by competitive binding of C10orf90/FATS to HDAC1. As to expression, expressed in all adult tissues, with 5-fold lower levels observed in the brain.

Its subcellular location is the cytoplasm. The protein localises to the nucleus. Functionally, plays an important role in controlling cell cycle progression and DNA damage-induced G2 arrest. Involved in p53/TP53 mediated inhibition of cellular proliferation in response to DNA damage. Also involved in p53-independent DNA damage-induced G2 arrest mediated by CREB3L1 in astrocytes and osteoblasts. Binds to and inhibits cyclin-dependent kinase activity, preventing phosphorylation of critical cyclin-dependent kinase substrates and blocking cell cycle progression. Functions in the nuclear localization and assembly of cyclin D-CDK4 complex and promotes its kinase activity towards RB1. At higher stoichiometric ratios, inhibits the kinase activity of the cyclin D-CDK4 complex. Inhibits DNA synthesis by DNA polymerase delta by competing with POLD3 for PCNA binding. Negatively regulates the CDK4- and CDK6-driven phosphorylation of RB1 in keratinocytes, thereby resulting in the release of E2F1 and subsequent transcription of E2F1-driven G1/S phase promoting genes. The chain is Cyclin-dependent kinase inhibitor 1 from Homo sapiens (Human).